The chain runs to 553 residues: Serine/threonine-protein phosphatase 2B catalytic subunit A1 (553 aa).

At S2 the chain carries N-acetylserine. The Fe cation site is built by D119, H121, and D147. Residues D147 and N179 each coordinate Zn(2+). H180 acts as the Proton donor in catalysis. 2 residues coordinate Zn(2+): H228 and H317. A disordered region spans residues 413 to 447 (LDPESEPKAAEETVKARANATKETGTPSDEKASSA). Basic and acidic residues predominate over residues 417-427 (SEPKAAEETVK).

Belongs to the PPP phosphatase family. PP-2B subfamily. In terms of assembly, composed of two components (A and B), the A component is the catalytic subunit and the B component confers calcium sensitivity. Fe(3+) is required as a cofactor. Zn(2+) serves as cofactor.

It catalyses the reaction O-phospho-L-seryl-[protein] + H2O = L-seryl-[protein] + phosphate. The enzyme catalyses O-phospho-L-threonyl-[protein] + H2O = L-threonyl-[protein] + phosphate. In terms of biological role, calcium-dependent, calmodulin-stimulated protein phosphatase. This subunit may have a role in the calmodulin activation of calcineurin. In Saccharomyces cerevisiae (strain ATCC 204508 / S288c) (Baker's yeast), this protein is Serine/threonine-protein phosphatase 2B catalytic subunit A1 (CNA1).